A 515-amino-acid chain; its full sequence is ATP synthase subunit alpha (515 aa).

ATP is bound at residue Gly169 to Thr176.

The protein belongs to the ATPase alpha/beta chains family. In terms of assembly, F-type ATPases have 2 components, CF(1) - the catalytic core - and CF(0) - the membrane proton channel. CF(1) has five subunits: alpha(3), beta(3), gamma(1), delta(1), epsilon(1). CF(0) has three main subunits: a(1), b(2) and c(9-12). The alpha and beta chains form an alternating ring which encloses part of the gamma chain. CF(1) is attached to CF(0) by a central stalk formed by the gamma and epsilon chains, while a peripheral stalk is formed by the delta and b chains.

It is found in the cell inner membrane. The enzyme catalyses ATP + H2O + 4 H(+)(in) = ADP + phosphate + 5 H(+)(out). Its function is as follows. Produces ATP from ADP in the presence of a proton gradient across the membrane. The alpha chain is a regulatory subunit. The polypeptide is ATP synthase subunit alpha (Neisseria gonorrhoeae (strain ATCC 700825 / FA 1090)).